Consider the following 326-residue polypeptide: tRNA dimethylallyltransferase 2 (326 aa).

Residue Gly14 to Thr21 coordinates ATP. Thr16–Thr21 provides a ligand contact to substrate. The segment at Asp39 to Gln42 is interaction with substrate tRNA.

It belongs to the IPP transferase family. Monomer. Mg(2+) serves as cofactor.

The enzyme catalyses adenosine(37) in tRNA + dimethylallyl diphosphate = N(6)-dimethylallyladenosine(37) in tRNA + diphosphate. In terms of biological role, catalyzes the transfer of a dimethylallyl group onto the adenine at position 37 in tRNAs that read codons beginning with uridine, leading to the formation of N6-(dimethylallyl)adenosine (i(6)A). This is tRNA dimethylallyltransferase 2 from Geotalea daltonii (strain DSM 22248 / JCM 15807 / FRC-32) (Geobacter daltonii).